Reading from the N-terminus, the 395-residue chain is Phosphopentomutase (395 aa).

Residues Asp14, Asp289, His294, Asp330, His331, and His342 each coordinate Mn(2+).

Belongs to the phosphopentomutase family. Mn(2+) serves as cofactor.

Its subcellular location is the cytoplasm. The catalysed reaction is 2-deoxy-alpha-D-ribose 1-phosphate = 2-deoxy-D-ribose 5-phosphate. The enzyme catalyses alpha-D-ribose 1-phosphate = D-ribose 5-phosphate. Its pathway is carbohydrate degradation; 2-deoxy-D-ribose 1-phosphate degradation; D-glyceraldehyde 3-phosphate and acetaldehyde from 2-deoxy-alpha-D-ribose 1-phosphate: step 1/2. Functionally, isomerase that catalyzes the conversion of deoxy-ribose 1-phosphate (dRib-1-P) and ribose 1-phosphate (Rib-1-P) to deoxy-ribose 5-phosphate (dRib-5-P) and ribose 5-phosphate (Rib-5-P), respectively. The sequence is that of Phosphopentomutase from Mycoplasmopsis pulmonis (strain UAB CTIP) (Mycoplasma pulmonis).